We begin with the raw amino-acid sequence, 139 residues long: Putative translationally-controlled tumor protein-like protein TPT1P8 (139 aa).

The TCTP domain occupies 1–139 (MIIFQDLISH…KTTSSLLVKT (139 aa)). The segment covering 40 to 51 (TGNTDDSLIGRN) has biased composition (polar residues). Positions 40–60 (TGNTDDSLIGRNSSSESTEDE) are disordered.

The protein belongs to the TCTP family.

This chain is Putative translationally-controlled tumor protein-like protein TPT1P8 (TPT1P8), found in Homo sapiens (Human).